Consider the following 518-residue polypeptide: Glutamate--cysteine ligase (518 aa).

This sequence belongs to the glutamate--cysteine ligase type 1 family. Type 1 subfamily.

It catalyses the reaction L-cysteine + L-glutamate + ATP = gamma-L-glutamyl-L-cysteine + ADP + phosphate + H(+). It participates in sulfur metabolism; glutathione biosynthesis; glutathione from L-cysteine and L-glutamate: step 1/2. This is Glutamate--cysteine ligase from Escherichia coli O8 (strain IAI1).